The chain runs to 352 residues: E3 ubiquitin-protein ligase RNF146 (352 aa).

Residues cysteine 36–arginine 74 form an RING-type zinc finger. Glycyl lysine isopeptide (Lys-Gly) (interchain with G-Cter in ubiquitin) cross-links involve residues lysine 84 and lysine 94. A WWE domain is found at glutamate 91–arginine 167. A glycoprotein-binding residues include tyrosine 107, arginine 110, and tryptophan 114. A Glycyl lysine isopeptide (Lys-Gly) (interchain with G-Cter in ubiquitin) cross-link involves residue lysine 130. A glycoprotein-binding residues include tyrosine 144, glutamine 153, arginine 163, and lysine 175. Lysine 175 participates in a covalent cross-link: Glycyl lysine isopeptide (Lys-Gly) (interchain with G-Cter in ubiquitin). Disordered stretches follow at residues serine 195–serine 242, glutamate 259–aspartate 293, and asparagine 317–valine 352. Positions alanine 197 to serine 210 are enriched in low complexity. Over residues valine 215 to valine 233 the composition is skewed to polar residues. The span at serine 282 to aspartate 293 shows a compositional bias: acidic residues. Serine 288 and serine 292 each carry phosphoserine.

In terms of assembly, can form homooligomers. Interacts with PARsylated AXIN1, AXIN2, BLZF1, CASC3, H1-2, IPO7, LIG3, NCL, PARP1, XRCC1, XRCC5 and XRCC6. Interacts with DDB1, DHX15, IQGAP1, LRPPRC, PARP2, PRKDC, RUVBL2, TNKS1 and TNKS2. Binding often leads to interactor ubiquitination, in the presence of the appropriate E1 and E2 enzymes, and proteasomal degradation. Ubiquitinated; autoubiquitinated. Autoubiquitination is enhanced upon poly(ADP-ribose)-binding.

It is found in the cytoplasm. It localises to the cytosol. The protein resides in the nucleus. It carries out the reaction S-ubiquitinyl-[E2 ubiquitin-conjugating enzyme]-L-cysteine + [acceptor protein]-L-lysine = [E2 ubiquitin-conjugating enzyme]-L-cysteine + N(6)-ubiquitinyl-[acceptor protein]-L-lysine.. It participates in protein modification; protein ubiquitination. E3 ubiquitin-protein ligase that specifically binds poly-ADP-ribosylated (PARsylated) proteins and mediates their ubiquitination and subsequent degradation. May regulate many important biological processes, such as cell survival and DNA damage response. Acts as an activator of the Wnt signaling pathway by mediating the ubiquitination of PARsylated AXIN1 and AXIN2, 2 key components of the beta-catenin destruction complex. Acts in cooperation with tankyrase proteins (TNKS and TNKS2), which mediate PARsylation of target proteins AXIN1, AXIN2, BLZF1, CASC3, TNKS and TNKS2. Recognizes and binds tankyrase-dependent PARsylated proteins via its WWE domain and mediates their ubiquitination, leading to their degradation. Different ubiquitin linkage types have been observed: TNKS2 undergoes ubiquitination at 'Lys-48' and 'Lys-63', while AXIN1 is only ubiquitinated at 'Lys-48'. May regulate TNKS and TNKS2 subcellular location, preventing aggregation at a centrosomal location. Neuroprotective protein. Protects the brain against N-methyl-D-aspartate (NMDA) receptor-mediated glutamate excitotoxicity and ischemia, by interfering with PAR-induced cell death, called parthanatos. Prevents nuclear translocation of AIFM1 in a PAR-binding dependent manner. Does not affect PARP1 activation. Protects against cell death induced by DNA damaging agents, such as N-methyl-N-nitro-N-nitrosoguanidine (MNNG) and rescues cells from G1 arrest. Promotes cell survival after gamma-irradiation. Facilitates DNA repair. This Rattus norvegicus (Rat) protein is E3 ubiquitin-protein ligase RNF146 (Rnf146).